The sequence spans 442 residues: Putative major teichoic acid biosynthesis protein C (442 aa).

Functionally, unknown. Might be involved in poly(glycerol phosphate) teichoic acid biosynthesis. The chain is Putative major teichoic acid biosynthesis protein C (tagC) from Bacillus subtilis (strain 168).